A 125-amino-acid polypeptide reads, in one-letter code: Translation initiation factor 5A (125 aa).

The residue at position 35 (K35) is a Hypusine.

This sequence belongs to the eIF-5A family.

The protein resides in the cytoplasm. In terms of biological role, functions by promoting the formation of the first peptide bond. The polypeptide is Translation initiation factor 5A (eIF5A) (Methanoregula boonei (strain DSM 21154 / JCM 14090 / 6A8)).